Consider the following 198-residue polypeptide: Recombination protein RecR (198 aa).

The segment at 57-72 (CSICGNLTESDPCAIC) adopts a C4-type zinc-finger fold. The 96-residue stretch at 80–175 (TTILVVEESK…KVTRLARGLA (96 aa)) folds into the Toprim domain.

The protein belongs to the RecR family.

Its function is as follows. May play a role in DNA repair. It seems to be involved in an RecBC-independent recombinational process of DNA repair. It may act with RecF and RecO. The sequence is that of Recombination protein RecR from Lactococcus lactis subsp. cremoris (strain MG1363).